A 438-amino-acid chain; its full sequence is Mannose-1-phosphate guanylyltransferase regulatory subunit alpha (438 aa).

Residues 2 to 260 (LKAVILIGGP…PNWWSQLKTA (259 aa)) form a substrate-binding domain region. Residues E87 and Q256 each contribute to the GDP-alpha-D-mannose site. A hexapeptide repeat domain region spans residues 282–438 (LANVGIKRGE…SRSFKNEIIL (157 aa)). A C-loop region spans residues 373 to 402 (TPSDPDPNKPFAKMENPPLFNNEGKLNPSI).

Belongs to the transferase hexapeptide repeat family. Component of the GMPPA-GMPPB mannose-1-phosphate guanylyltransferase complex composed of 4 GMPPA subunits and 8 GMPPB subunits; the complex is organized into three layers, a central layer made up of 2 GMPPA dimers sandwiched between two layers each made up of 2 GMPPB dimers.

Regulatory subunit of the GMPPA-GMPPB mannose-1-phosphate guanylyltransferase complex; reduces the catalytic activity of GMPPB when part of the complex. Mediates allosteric feedback inhibition of GMPPB catalytic activity upon binding GDP-alpha-D-mannose. Together with GMPPB regulates GDP-alpha-D-mannose levels. The sequence is that of Mannose-1-phosphate guanylyltransferase regulatory subunit alpha from Drosophila melanogaster (Fruit fly).